A 245-amino-acid polypeptide reads, in one-letter code: MENPQVCECYHGDVEEEKKKKQNNTTSPVHVVLKIDFHCDGCIARIVRLSRRLEGVETVRADPDSNKLTLIGFIMDPVKIAEKLQKKSKKKVELISPKPKKDTKENNEKKANDKTQTVVAVTTVVLKVNCSCDGCIKRIQKAVSTTKGVYQVKMDKEKETVTVMGTMDIKSVTDNLKRKLKKTVQVVPEKKKKKKDKDNAEVNTKVGSPCQPGNGCTHGIGPYRFMEGPMTGFFSEEDQSYCSVM.

Positions 28-92 (PVHVVLKIDF…KLQKKSKKKV (65 aa)) constitute an HMA 1 domain. Residues Cys-39 and Cys-42 each coordinate a metal cation. The disordered stretch occupies residues 91 to 113 (KVELISPKPKKDTKENNEKKAND). Basic and acidic residues predominate over residues 99 to 113 (PKKDTKENNEKKAND). Residues 121 to 188 (VTTVVLKVNC…KLKKTVQVVP (68 aa)) enclose the HMA 2 domain. 2 residues coordinate a metal cation: Cys-132 and Cys-135. At Cys-242 the chain carries Cysteine methyl ester. Cys-242 carries S-farnesyl cysteine lipidation. Positions 243–245 (SVM) are cleaved as a propeptide — removed in mature form.

This sequence belongs to the HIPP family.

In terms of biological role, heavy-metal-binding protein. This Arabidopsis thaliana (Mouse-ear cress) protein is Heavy metal-associated isoprenylated plant protein 1.